The following is a 193-amino-acid chain: CASP-like protein 2U1 (193 aa).

Residues 1–18 lie on the Cytoplasmic side of the membrane; sequence MAMALALGGGQDAERKVK. The chain crosses the membrane as a helical span at residues 19–39; sequence VAEVALRALLCGLGALAAALV. The Extracellular portion of the chain corresponds to 40 to 61; it reads ATDTQTRTFFSLQKKASYTDMK. Residues 62–82 traverse the membrane as a helical segment; the sequence is AMVFLVDAAAVAAGYSLLQLA. The Cytoplasmic portion of the chain corresponds to 83–113; that stretch reads ARCCGGGAMSSGRGDGGGRGRALSWCVFSCD. The helical transmembrane segment at 114–134 threads the bilayer; that stretch reads QALAYVLLAAVAAALQASVVA. The Extracellular portion of the chain corresponds to 135-156; that stretch reads KRGQPELQWMGICALYGAFCRQ. A helical transmembrane segment spans residues 157-177; sequence AGAGLATAVVAGLAAVLLAFL. At 178-193 the chain is on the cytoplasmic side; sequence SAFNLFRLYGSGGTKS.

The protein belongs to the Casparian strip membrane proteins (CASP) family. In terms of assembly, homodimer and heterodimers.

The protein localises to the cell membrane. This is CASP-like protein 2U1 from Sorghum bicolor (Sorghum).